Here is a 167-residue protein sequence, read N- to C-terminus: Calcium-binding protein CML19 (167 aa).

EF-hand domains follow at residues 23 to 58, 59 to 94, 96 to 131, and 132 to 167; these read QKRR…LGFE, MNNQ…KFGE, DSID…LGEN, and FTDN…TSYG. Ca(2+) is bound by residues D36, D38, S40, S42, E47, D72, N74, S76, E83, D109, D111, N113, K115, D120, D145, D147, D149, E151, and E156.

The protein belongs to the centrin family. Interacts with RAD4. Calcium is required for this interaction. Interacts with SAC3B. In terms of tissue distribution, expressed in leaves, roots, and at lower level in stems. Barely detectable in flower buds and flowers.

It is found in the cytoplasm. The protein resides in the nucleus. Functionally, potential calcium sensor that binds calcium in vitro. Modulates homologous recombination and nucleotide excision repair (NER). Involved in the early response to UV irradiation. The sequence is that of Calcium-binding protein CML19 from Arabidopsis thaliana (Mouse-ear cress).